The following is a 256-amino-acid chain: Tryptophan synthase alpha chain (256 aa).

Catalysis depends on proton acceptor residues glutamate 46 and aspartate 57.

This sequence belongs to the TrpA family. Tetramer of two alpha and two beta chains.

It catalyses the reaction (1S,2R)-1-C-(indol-3-yl)glycerol 3-phosphate + L-serine = D-glyceraldehyde 3-phosphate + L-tryptophan + H2O. It participates in amino-acid biosynthesis; L-tryptophan biosynthesis; L-tryptophan from chorismate: step 5/5. Its function is as follows. The alpha subunit is responsible for the aldol cleavage of indoleglycerol phosphate to indole and glyceraldehyde 3-phosphate. The sequence is that of Tryptophan synthase alpha chain from Bacteroides thetaiotaomicron (strain ATCC 29148 / DSM 2079 / JCM 5827 / CCUG 10774 / NCTC 10582 / VPI-5482 / E50).